We begin with the raw amino-acid sequence, 492 residues long: Probable glycine dehydrogenase (decarboxylating) subunit 2 (492 aa).

N6-(pyridoxal phosphate)lysine is present on Lys-274.

The protein belongs to the GcvP family. C-terminal subunit subfamily. The glycine cleavage system is composed of four proteins: P, T, L and H. In this organism, the P 'protein' is a heterodimer of two subunits. The cofactor is pyridoxal 5'-phosphate.

It catalyses the reaction N(6)-[(R)-lipoyl]-L-lysyl-[glycine-cleavage complex H protein] + glycine + H(+) = N(6)-[(R)-S(8)-aminomethyldihydrolipoyl]-L-lysyl-[glycine-cleavage complex H protein] + CO2. The glycine cleavage system catalyzes the degradation of glycine. The P protein binds the alpha-amino group of glycine through its pyridoxal phosphate cofactor; CO(2) is released and the remaining methylamine moiety is then transferred to the lipoamide cofactor of the H protein. This Staphylococcus haemolyticus (strain JCSC1435) protein is Probable glycine dehydrogenase (decarboxylating) subunit 2.